Reading from the N-terminus, the 788-residue chain is Probable phosphoketolase 1 (788 aa).

It belongs to the XFP family. Requires thiamine diphosphate as cofactor.

The polypeptide is Probable phosphoketolase 1 (Lactiplantibacillus plantarum (strain ATCC BAA-793 / NCIMB 8826 / WCFS1) (Lactobacillus plantarum)).